A 764-amino-acid polypeptide reads, in one-letter code: Cyclin-F (764 aa).

Residues 19–27 (RKRVRKRAS) carry the Nuclear localization signal 1 motif. Residues 28–75 (AVSLLSLPEELLVFVLQCLSAEDLLSVRAVHSHLCDIIDTNASIWARV) form the F-box domain. Residues 307 to 404 (TKRYILVDWL…EVISVLDGKI (98 aa)) enclose the Cyclin N-terminal domain. The short motif at 309 to 312 (RYIL) is the D box 1 element. A Nuclear localization signal 2 motif is present at residues 570 to 575 (SSKRRR). Positions 583 to 738 (RGAFVATPTA…PSQRIRRQVK (156 aa)) are PEST. The interval 662–754 (CEEDEQEPPT…HSAGEAEQED (93 aa)) is disordered. Over residues 682–692 (SSSSTSSSSSS) the composition is skewed to low complexity. Positions 702–722 (SGYSSIQSFPSPTGSSALVSP) are enriched in polar residues. A compositionally biased stretch (basic residues) spans 732–742 (RIRRQVKRKNT).

Belongs to the cyclin family. Cyclin AB subfamily. As to quaternary structure, component of the SCF(CCNF) complex. As to expression, expressed in the brain.

Its subcellular location is the nucleus. The protein resides in the cytoplasm. The protein localises to the perinuclear region. It localises to the cytoskeleton. It is found in the microtubule organizing center. Its subcellular location is the centrosome. The protein resides in the centriole. Its function is as follows. Substrate recognition component of a SCF (SKP1-CUL1-F-box protein) E3 ubiquitin-protein ligase complex which mediates the ubiquitination and subsequent proteasomal degradation of target proteins. The SCF(CCNF) E3 ubiquitin-protein ligase complex is an integral component of the ubiquitin proteasome system (UPS) and links proteasome degradation to the cell cycle. Mediates the substrate recognition and the proteasomal degradation of various target proteins during G2 phase involved in the regulation of cell cycle progression and in the maintenance of genome stability. May play a role in motor neuron development and axonal outgrowth. This Danio rerio (Zebrafish) protein is Cyclin-F (ccnf).